Here is a 523-residue protein sequence, read N- to C-terminus: Probable malate:quinone oxidoreductase (523 aa).

This sequence belongs to the MQO family. FAD is required as a cofactor.

It carries out the reaction (S)-malate + a quinone = a quinol + oxaloacetate. Its pathway is carbohydrate metabolism; tricarboxylic acid cycle; oxaloacetate from (S)-malate (quinone route): step 1/1. The sequence is that of Probable malate:quinone oxidoreductase from Agrobacterium fabrum (strain C58 / ATCC 33970) (Agrobacterium tumefaciens (strain C58)).